Consider the following 511-residue polypeptide: Putative thymidine phosphorylase (511 aa).

This sequence belongs to the thymidine/pyrimidine-nucleoside phosphorylase family. Type 2 subfamily.

The enzyme catalyses thymidine + phosphate = 2-deoxy-alpha-D-ribose 1-phosphate + thymine. This is Putative thymidine phosphorylase from Polaromonas sp. (strain JS666 / ATCC BAA-500).